The chain runs to 272 residues: MDNLIKDMRENLNSYSFKVVSDLVKELEVNRDNKAQIKELADLLKEDKRKNVSSLGNRLEKNLNNLIKEEERVKNMYLFDKSFGDYKYVAGVDEVGRGPLAGPIVSAAVILDSSDLDDIILYINDSKKLSEHKREELSEIIKEKALSYSISMCDSKEIDEKGIGYCNNEVFIKACEGLSIKPDLVLSDGYLIKNFNGENKHVIKGDTKSACIACASIIAKVYRDNIMKEYNKKYPQYDFEKNVGYGTKTHVDALKEVGPTEIHRMSFLKNIL.

The RNase H type-2 domain maps to 87 to 272 (KYVAGVDEVG…HRMSFLKNIL (186 aa)). 3 residues coordinate a divalent metal cation: Asp93, Glu94, and Asp188.

The protein belongs to the RNase HII family. Mn(2+) is required as a cofactor. The cofactor is Mg(2+).

The protein localises to the cytoplasm. The catalysed reaction is Endonucleolytic cleavage to 5'-phosphomonoester.. Its function is as follows. Endonuclease that specifically degrades the RNA of RNA-DNA hybrids. This chain is Ribonuclease HII, found in Clostridium perfringens (strain 13 / Type A).